The sequence spans 276 residues: MGTSIVNLNQKIELPPIQVLFESLNRENETKPHFEERRLYQPNPSFVPRTNIAVGSPVNPVPVSSPVFFIGPSPQRSIQNHNAIMTQNIRQYPVIYNNNREVISTGERNYIITVGGPPVTSSQPEYEHISTPNFYQEQRLAQPHPVNESMMIGGYTNPQPISISRGKMLSGNISTNSVRGSNNGYSAKEKKHKAHGKRSNLPKATVSILNKWLHEHVNNPYPTVQEKRELLAKTGLTKLQISNWFINARRRKIFSGQNDANNFRRKFSSSTNLAKF.

The span at 176–185 shows a compositional bias: polar residues; the sequence is NSVRGSNNGY. The disordered stretch occupies residues 176 to 199; it reads NSVRGSNNGYSAKEKKHKAHGKRS. Over residues 189-199 the composition is skewed to basic residues; that stretch reads EKKHKAHGKRS. The segment at residues 194–256 is a DNA-binding region (homeobox; TALE-type); it reads AHGKRSNLPK…NARRRKIFSG (63 aa).

This sequence belongs to the TALE/CUP9 homeobox family.

It localises to the nucleus. The chain is Homeobox protein TOS8 (TOS8) from Saccharomyces cerevisiae (strain ATCC 204508 / S288c) (Baker's yeast).